We begin with the raw amino-acid sequence, 684 residues long: Methionine--tRNA ligase (684 aa).

The short motif at 14-24 (PYANGAIHLGH) is the 'HIGH' region element. Residues cysteine 145, cysteine 148, cysteine 158, and cysteine 161 each contribute to the Zn(2+) site. Positions 330–334 (KMSKS) match the 'KMSKS' region motif. Position 333 (lysine 333) interacts with ATP. The 103-residue stretch at 582-684 (DFAKLDLRVA…CGIRPGMQVK (103 aa)) folds into the tRNA-binding domain.

Belongs to the class-I aminoacyl-tRNA synthetase family. MetG type 1 subfamily. As to quaternary structure, homodimer. Zn(2+) serves as cofactor.

The protein localises to the cytoplasm. It carries out the reaction tRNA(Met) + L-methionine + ATP = L-methionyl-tRNA(Met) + AMP + diphosphate. In terms of biological role, is required not only for elongation of protein synthesis but also for the initiation of all mRNA translation through initiator tRNA(fMet) aminoacylation. The sequence is that of Methionine--tRNA ligase from Haemophilus ducreyi (strain 35000HP / ATCC 700724).